The following is a 929-amino-acid chain: MELRKIVPNLLVLYVAVHFSQSSEIKVINVLELHDVRQTAAAIENLSGALQTVGDLYITSTFMLPPKLGGVLFGLYDKQDNKKYLEIAVVGKINKLLVRYLRSDGKAHTVNLQNPALAEGRTQSLILRIGGLRRSHINLELYVNCRLVDSAQGLPSFVGLPSEAESVDVRTGQKSYARIQGLVESVKLALGGSLATAGLLIDCPFQGDSAINNAVVSDINAILGDHTKALIGQLIIFNQIMGELREDIREQTKEMSLIRNTILECQVCGFHEPQSRCLPNPCYTGVSCMESMMYPGYQCGPCPEELCVNTAKGFSCQSCPIGFTGPTLKGVGLEFAKRHKQHCVDIDECAELSGSCVPNSVCINTVGSFKCGQCKAGFVGNQTVGCFARRTCETLGYSPCDVNSHCVMGRNSDVSCVCNVGWAGNGNICGPDSDIDGYPDEPLPCMDNDKHCRADNCANTPNSGQEDTDGDGIGDQCDEDADGDGIKNVEDNCRLVPNKDQQNSDTDSYGDACDNCPNVPNGDQLDTDGNGKGDICDTDIDGDGIPNVLDNCPKIPNPMQTDRDGDGVGDACDSCPEVNDPLQSDMDNDLVGDVCDTNKDIDGDGYQDTRDNCPEVPNSSQLDSDNDGIGDECDDDDDNDGIPDILPPGPDNCRLVPNPSQIDTDANGVGDVCETDFDNDKVTDLLDACPESAEVTMTDFRAFQTVILDPEGDAQIDPNWVVLNQGMEIVQTMNSDPGLAVGYTAFNGVDFEGTIHVNTATDDDYVGFIFGYQDSSSFYVVMWKQTEQTYWQNLPFKALAQPGIQLKAVKSRTGPGEYLRNALWHTGDTTGEVTLLWKDPRNVGWKDRASYRWHLSHRPQVGYIRLRLYEGTALVADSGVVIDSTMRGGRLGVFCFSQENVIWSNLGYRCNDSIPDDFMLYHKQMKLRT.

An N-terminal signal peptide occupies residues 1-22; that stretch reads MELRKIVPNLLVLYVAVHFSQS. Residues 24–192 enclose the Laminin G-like domain; sequence EIKVINVLEL…VESVKLALGG (169 aa). Residue Asn-45 is glycosylated (N-linked (GlcNAc...) asparagine). Intrachain disulfides connect Cys-277–Cys-288, Cys-282–Cys-299, Cys-319–Cys-343, Cys-349–Cys-362, Cys-356–Cys-371, Cys-374–Cys-386, Cys-392–Cys-406, Cys-400–Cys-416, Cys-418–Cys-429, Cys-445–Cys-452, Cys-457–Cys-477, Cys-493–Cys-513, Cys-516–Cys-536, Cys-552–Cys-572, Cys-575–Cys-595, Cys-613–Cys-633, Cys-653–Cys-673, and Cys-689–Cys-910. Residues 345–384 form the EGF-like 1; calcium-binding domain; sequence DIDECAELSGSCVPNSVCINTVGSFKCGQCKAGFVGNQTV. A glycan (N-linked (GlcNAc...) asparagine) is linked at Asn-381. The 43-residue stretch at 388–430 folds into the EGF-like 2 domain; the sequence is ARRTCETLGYSPCDVNSHCVMGRNSDVSCVCNVGWAGNGNICG. TSP type-3 repeat units follow at residues 431–465, 466–501, 502–524, 525–560, 561–583, 584–621, 622–661, and 662–697; these read PDSD…NSGQ, EDTD…NKDQ, QNSD…NGDQ, LDTD…NPMQ, TDRD…DPLQ, SDMD…NSSQ, LDSD…NPSQ, and IDTD…EVTM. Over residues 602-613 the composition is skewed to basic and acidic residues; sequence DGDGYQDTRDNC. The disordered stretch occupies residues 602-651; the sequence is DGDGYQDTRDNCPEVPNSSQLDSDNDGIGDECDDDDDNDGIPDILPPGPD. Asn-618 is a glycosylation site (N-linked (GlcNAc...) asparagine). Residues 624 to 641 are compositionally biased toward acidic residues; it reads SDNDGIGDECDDDDDNDG. One can recognise a TSP C-terminal domain in the interval 701–915; the sequence is RAFQTVILDP…LGYRCNDSIP (215 aa). Asn-911 carries an N-linked (GlcNAc...) asparagine glycan.

This sequence belongs to the thrombospondin family. As to quaternary structure, oligomer; disulfide-linked.

Functionally, adhesive glycoprotein that mediates cell-to-cell and cell-to-matrix interactions. Can bind to fibrinogen, fibronectin, laminin and type V collagen. This is Thrombospondin-3b from Danio rerio (Zebrafish).